We begin with the raw amino-acid sequence, 248 residues long: METTIHNLNGDKADTLELPAVFETPYRPDVIERAVVAAQANRKQPYGADPYAGMRTPAESFGSGRGMAHVPRENGQARRVPQAVSGRKAHPPKAEKDQSKSVNTKERKLAFQSAVAATADPSQVEERGHQFENDVELPLVVSDEFEELIKTQEVVDVLESLGVHADIVRSDENKSIRAGRGKTRGRKYRRPKSILFITSDEPSKAARNLAGADVVTAANVSAEDLAPGTQPGRLTVYTESAIKEVADR.

A disordered region spans residues 45 to 105 (PYGADPYAGM…KDQSKSVNTK (61 aa)). Positions 92–105 (PKAEKDQSKSVNTK) are enriched in basic and acidic residues.

The protein belongs to the universal ribosomal protein uL4 family. As to quaternary structure, part of the 50S ribosomal subunit.

Functionally, one of the primary rRNA binding proteins, this protein initially binds near the 5'-end of the 23S rRNA. It is important during the early stages of 50S assembly. It makes multiple contacts with different domains of the 23S rRNA in the assembled 50S subunit and ribosome. Its function is as follows. Forms part of the polypeptide exit tunnel. This chain is Large ribosomal subunit protein uL4, found in Haloquadratum walsbyi (strain DSM 16790 / HBSQ001).